The chain runs to 343 residues: Dual oxidase maturation factor 1 (343 aa).

The Extracellular portion of the chain corresponds to 1-24 (MATLGHTFPFYAGPKPTFPMDTTL). Residues 25–45 (ASIIMIFLTALATFIVILPGI) traverse the membrane as a helical segment. At 46-51 (RGKTRL) the chain is on the cytoplasmic side. A helical transmembrane segment spans residues 52 to 72 (FWLLRVVTSLFIGAAILAVNF). Topologically, residues 73–183 (SSEWSVGQVS…RLAGHYTSAM (111 aa)) are extracellular. 3 N-linked (GlcNAc...) asparagine glycosylation sites follow: Asn-84, Asn-109, and Asn-121. Residues 184–204 (LWVAFLCWLLANVMLSMPVLV) form a helical membrane-spanning segment. The Cytoplasmic portion of the chain corresponds to 205-206 (YG). Residues 207–227 (GYMLLATGIFQLLALLFFSMA) form a helical membrane-spanning segment. Topologically, residues 228–249 (TSLTSPCPLHLGASVLHTHHGP) are extracellular. A helical membrane pass occupies residues 250–270 (AFWITLTTGLLCVLLGLAMAV). Residues 271 to 343 (AHRMQPHRLK…AHPKDPDCAL (73 aa)) are Cytoplasmic-facing. Residues 306–343 (RYRSMADSPKSQDIPLSEASSTKAYCKEAHPKDPDCAL) form a disordered region. Residues 330–343 (YCKEAHPKDPDCAL) show a composition bias toward basic and acidic residues.

The protein belongs to the DUOXA family. In terms of assembly, may interact with NUMB. Specifically expressed in thyroid gland. Also detected in esophagus.

The protein resides in the membrane. Functionally, may be required for the maturation and the transport from the endoplasmic reticulum to the plasma membrane of functional DUOX1. The protein is Dual oxidase maturation factor 1 (DUOXA1) of Homo sapiens (Human).